The primary structure comprises 340 residues: Guanine nucleotide-binding protein subunit beta-1 (340 aa).

WD repeat units follow at residues 53 to 83 (GHLA…IVWD), 95 to 125 (LRSS…SIYS), 141 to 170 (GHTG…ALWD), 182 to 212 (GHTG…KLWD), 224 to 254 (GHES…RLFD), 268 to 298 (NIIC…NVWD), and 310 to 340 (GHDN…KIWN).

It belongs to the WD repeat G protein beta family. G proteins are composed of 3 units, alpha, beta and gamma. Interacts with G protein gamma subunits gpc-1 and gpc-2 and with egl-10 and eat-16. Interacts with goa-1 (in GDP-bound form).

Guanine nucleotide-binding proteins (G proteins) are involved as a modulator or transducer in various transmembrane signaling systems. The beta and gamma chains are required for the GTPase activity, for replacement of GDP by GTP, and for G protein-effector interaction. In the early embryo, controls the magnitude of the forces acting on centrosomes but is not required for generating asymmetric forces. The protein is Guanine nucleotide-binding protein subunit beta-1 (gpb-1) of Caenorhabditis briggsae.